The following is a 293-amino-acid chain: 33 kDa chaperonin (293 aa).

2 disulfides stabilise this stretch: C237–C239 and C271–C274.

This sequence belongs to the HSP33 family. Under oxidizing conditions two disulfide bonds are formed involving the reactive cysteines. Under reducing conditions zinc is bound to the reactive cysteines and the protein is inactive.

It is found in the cytoplasm. Its function is as follows. Redox regulated molecular chaperone. Protects both thermally unfolding and oxidatively damaged proteins from irreversible aggregation. Plays an important role in the bacterial defense system toward oxidative stress. The chain is 33 kDa chaperonin from Haemophilus influenzae (strain PittGG).